We begin with the raw amino-acid sequence, 478 residues long: D(1B) dopamine receptor (478 aa).

Over 1–38 the chain is Extracellular; sequence MLPPGRNGTAHRARLGLQRQLAQVDAPGGSAAPLGPAQ. N-linked (GlcNAc...) asparagine glycosylation is present at asparagine 7. A helical transmembrane segment spans residues 39–64; that stretch reads VVTAGLLTLLIVWTLLGNVLVCAAIV. Residues 65–75 lie on the Cytoplasmic side of the membrane; the sequence is RSRHLRAKMTN. A helical transmembrane segment spans residues 76-102; sequence IFIVSLAVSDLFVALLVMPWKAVAEVA. At 103–111 the chain is on the extracellular side; it reads GYWPFGAFC. The cysteines at positions 111 and 211 are disulfide-linked. Residues 112–134 traverse the membrane as a helical segment; the sequence is DIWVAFDIMCSTASILNLCIISV. Residues 135–153 are Cytoplasmic-facing; that stretch reads DRYWAISRPFRYERKMTQR. Residues 154-179 form a helical membrane-spanning segment; that stretch reads VALVMVALAWTLSILISFIPVQLNWH. Over 180–215 the chain is Extracellular; sequence RDKAGSQGREGLLSNETPWEEGWELDGRTENCDSSL. The chain crosses the membrane as a helical span at residues 216–240; it reads NRTYAISSSLISFYIPVAIMIVTYT. Residues 241–289 lie on the Cytoplasmic side of the membrane; sequence RIYRIAQVQIRRISSLERAAEHAQSCRSRGACEPDPSLRASIKKETKVF. The helical transmembrane segment at 290 to 317 threads the bilayer; the sequence is KTLSVIMGVFVCCWLPFFILNCMVPFCS. The Extracellular segment spans residues 318 to 335; it reads SGDAQGPRTGFPCVSETT. The chain crosses the membrane as a helical span at residues 336–357; that stretch reads FDIFVWFGWANSSLNPIIYAFN. Over 358–478 the chain is Cytoplasmic; the sequence is ADFRKVFAQL…LTPNCFHKTA (121 aa). Cysteine 370 is lipidated: S-palmitoyl cysteine. Residues 416–446 form a disordered region; it reads GDREVGEEEEAEEEGPFDHMSQISPTTPDGD. Residues 420-430 are compositionally biased toward acidic residues; that stretch reads VGEEEEAEEEG.

It belongs to the G-protein coupled receptor 1 family.

The protein localises to the cell membrane. In terms of biological role, dopamine receptor whose activity is mediated by G proteins which activate adenylyl cyclase. This Mus musculus (Mouse) protein is D(1B) dopamine receptor (Drd5).